The primary structure comprises 802 residues: Aldehyde dehydrogenase family 16 member A1 (802 aa).

It belongs to the aldehyde dehydrogenase family. In terms of assembly, interacts with SPG21.

The sequence is that of Aldehyde dehydrogenase family 16 member A1 (Aldh16a1) from Mus musculus (Mouse).